We begin with the raw amino-acid sequence, 407 residues long: Arginine biosynthesis bifunctional protein ArgJ (407 aa).

Residues Thr-169, Lys-192, Thr-203, Glu-283, Asn-402, and Ser-407 each contribute to the substrate site. Thr-203 functions as the Nucleophile in the catalytic mechanism.

The protein belongs to the ArgJ family. Heterotetramer of two alpha and two beta chains.

Its subcellular location is the cytoplasm. The catalysed reaction is N(2)-acetyl-L-ornithine + L-glutamate = N-acetyl-L-glutamate + L-ornithine. It carries out the reaction L-glutamate + acetyl-CoA = N-acetyl-L-glutamate + CoA + H(+). It participates in amino-acid biosynthesis; L-arginine biosynthesis; L-ornithine and N-acetyl-L-glutamate from L-glutamate and N(2)-acetyl-L-ornithine (cyclic): step 1/1. It functions in the pathway amino-acid biosynthesis; L-arginine biosynthesis; N(2)-acetyl-L-ornithine from L-glutamate: step 1/4. Catalyzes two activities which are involved in the cyclic version of arginine biosynthesis: the synthesis of N-acetylglutamate from glutamate and acetyl-CoA as the acetyl donor, and of ornithine by transacetylation between N(2)-acetylornithine and glutamate. This chain is Arginine biosynthesis bifunctional protein ArgJ, found in Mycobacterium leprae (strain TN).